A 258-amino-acid polypeptide reads, in one-letter code: Leucyl/phenylalanyl-tRNA--protein transferase (258 aa).

Residues 199 to 220 (GGSDGPAPDQSIGMSSSGGVSD) are disordered. Over residues 209-220 (SIGMSSSGGVSD) the composition is skewed to low complexity.

Belongs to the L/F-transferase family.

The protein localises to the cytoplasm. The enzyme catalyses N-terminal L-lysyl-[protein] + L-leucyl-tRNA(Leu) = N-terminal L-leucyl-L-lysyl-[protein] + tRNA(Leu) + H(+). It carries out the reaction N-terminal L-arginyl-[protein] + L-leucyl-tRNA(Leu) = N-terminal L-leucyl-L-arginyl-[protein] + tRNA(Leu) + H(+). It catalyses the reaction L-phenylalanyl-tRNA(Phe) + an N-terminal L-alpha-aminoacyl-[protein] = an N-terminal L-phenylalanyl-L-alpha-aminoacyl-[protein] + tRNA(Phe). Functionally, functions in the N-end rule pathway of protein degradation where it conjugates Leu, Phe and, less efficiently, Met from aminoacyl-tRNAs to the N-termini of proteins containing an N-terminal arginine or lysine. The polypeptide is Leucyl/phenylalanyl-tRNA--protein transferase (Hyphomonas neptunium (strain ATCC 15444)).